Reading from the N-terminus, the 662-residue chain is Histone-lysine N-methyltransferase SET9 (662 aa).

The SET domain maps to 115 to 229 (CPWEVSSTNR…AGEEITVTYG (115 aa)). 3 disordered regions span residues 260–437 (VPVQ…SLDT), 484–516 (EEGQAADAEQSKRKKQPRRVHKEDTPPARVRTP), and 601–662 (RVRN…FLDP). Composition is skewed to polar residues over residues 304 to 326 (KANSRGSLLARDTSSVRSPSIDQ), 355 to 379 (VSDSSSRGTSVTASESSGAVETDVT), and 398 to 437 (KKQNNEQSRLAPVSPQSTEGSRSPQQKNGALSSNRSSLDT). The segment covering 647–656 (RRSGRLRRVN) has biased composition (basic residues).

The protein belongs to the class V-like SAM-binding methyltransferase superfamily. Histone-lysine methyltransferase family. Suvar4-20 subfamily.

It is found in the nucleus. The protein localises to the chromosome. The enzyme catalyses L-lysyl(20)-[histone H4] + 3 S-adenosyl-L-methionine = N(6),N(6),N(6)-trimethyl-L-lysyl(20)-[histone H4] + 3 S-adenosyl-L-homocysteine + 3 H(+). Histone methyltransferase that trimethylates 'Lys-20' of histone H4 to form H4K20me3. The polypeptide is Histone-lysine N-methyltransferase SET9 (SET9) (Gibberella zeae (strain ATCC MYA-4620 / CBS 123657 / FGSC 9075 / NRRL 31084 / PH-1) (Wheat head blight fungus)).